The following is a 174-amino-acid chain: Disulfide bond formation protein B (174 aa).

Residues Met1–Ser14 lie on the Cytoplasmic side of the membrane. A helical transmembrane segment spans residues Trp15–Tyr31. Residues Leu32–Cys49 lie on the Periplasmic side of the membrane. Cys41 and Cys44 are disulfide-bonded. A helical membrane pass occupies residues Ala50–Pro65. The Cytoplasmic segment spans residues Phe66–Phe71. The helical transmembrane segment at Phe72 to Lys89 threads the bilayer. Topologically, residues Glu90 to Gln144 are periplasmic. An intrachain disulfide couples Cys104 to Cys130. A helical transmembrane segment spans residues Trp145–Ser163. Residues Gln164–Lys174 are Cytoplasmic-facing.

The protein belongs to the DsbB family.

The protein resides in the cell inner membrane. Required for disulfide bond formation in some periplasmic proteins. Acts by oxidizing the DsbA protein. This Blochmanniella pennsylvanica (strain BPEN) protein is Disulfide bond formation protein B.